Here is a 393-residue protein sequence, read N- to C-terminus: NAD(P)H-quinone oxidoreductase subunit H, chloroplastic (393 aa).

Belongs to the complex I 49 kDa subunit family. As to quaternary structure, NDH is composed of at least 16 different subunits, 5 of which are encoded in the nucleus.

It localises to the plastid. The protein resides in the chloroplast thylakoid membrane. It catalyses the reaction a plastoquinone + NADH + (n+1) H(+)(in) = a plastoquinol + NAD(+) + n H(+)(out). The enzyme catalyses a plastoquinone + NADPH + (n+1) H(+)(in) = a plastoquinol + NADP(+) + n H(+)(out). NDH shuttles electrons from NAD(P)H:plastoquinone, via FMN and iron-sulfur (Fe-S) centers, to quinones in the photosynthetic chain and possibly in a chloroplast respiratory chain. The immediate electron acceptor for the enzyme in this species is believed to be plastoquinone. Couples the redox reaction to proton translocation, and thus conserves the redox energy in a proton gradient. This chain is NAD(P)H-quinone oxidoreductase subunit H, chloroplastic, found in Fagopyrum esculentum subsp. ancestrale (Wild buckwheat).